The primary structure comprises 171 residues: Peptidyl-prolyl cis-trans isomerase 7 (171 aa).

Residues 7–170 enclose the PPIase cyclophilin-type domain; that stretch reads FFDITIAGKP…SECLIADCGQ (164 aa).

The protein belongs to the cyclophilin-type PPIase family.

It carries out the reaction [protein]-peptidylproline (omega=180) = [protein]-peptidylproline (omega=0). Its function is as follows. PPIases accelerate the folding of proteins. It catalyzes the cis-trans isomerization of proline imidic peptide bonds in oligopeptides. This Caenorhabditis elegans protein is Peptidyl-prolyl cis-trans isomerase 7 (cyn-7).